The chain runs to 177 residues: ATP synthase subunit delta (177 aa).

Belongs to the ATPase delta chain family. As to quaternary structure, F-type ATPases have 2 components, F(1) - the catalytic core - and F(0) - the membrane proton channel. F(1) has five subunits: alpha(3), beta(3), gamma(1), delta(1), epsilon(1). F(0) has three main subunits: a(1), b(2) and c(10-14). The alpha and beta chains form an alternating ring which encloses part of the gamma chain. F(1) is attached to F(0) by a central stalk formed by the gamma and epsilon chains, while a peripheral stalk is formed by the delta and b chains.

The protein localises to the cell inner membrane. F(1)F(0) ATP synthase produces ATP from ADP in the presence of a proton or sodium gradient. F-type ATPases consist of two structural domains, F(1) containing the extramembraneous catalytic core and F(0) containing the membrane proton channel, linked together by a central stalk and a peripheral stalk. During catalysis, ATP synthesis in the catalytic domain of F(1) is coupled via a rotary mechanism of the central stalk subunits to proton translocation. Its function is as follows. This protein is part of the stalk that links CF(0) to CF(1). It either transmits conformational changes from CF(0) to CF(1) or is implicated in proton conduction. This is ATP synthase subunit delta from Neisseria meningitidis serogroup A / serotype 4A (strain DSM 15465 / Z2491).